Here is a 543-residue protein sequence, read N- to C-terminus: MKTLASRKSLWMLLFIVIFWVSFTVFRNPVKLRTMFKLPVSFNRWNLVMGPSCPAVPLNLPVSPKETELRIREVLEKLDKQIPPRPFTHLNYTTSATHSTATILNPRDTHCVGDQLDILVEARDHLGNRKGYGGDFMRARMFSPALKAGASGKVTDFNNGTYLVSFTLFWEGTVSLSILLMHPSEGVSALWRSRKQGYDRIIFSGQFVSGASQVHTECALVLNSSVELCQYLDAQDQEAFYCVKPPNVPCAALTYMQSKNKDVSYLSQQERSLFERSNIAVEIMEKSNAISVSKCNTDTAPVKEKCKLGMVSAIPSGHVWKNAWTPASCSLAPIKMKDCLRGKFIYLMGDSTIRQWMEYFKSKVNTLRSVDLHESGKLQHQLAVDLDEKISIQWQKHGYPLIGSLVYSVKEIENIARIIDRTGGEKNTVIVISLGQHFRPFPIDLFIRRALNVHKALQRLLLRSPDTVVVLKTENTRELNSDVERFSDFHGYTQYLALKDIFQDLNVGVIDAWDMTVAYGINNVHPPEDVVRSQINIFLNYIC.

Positions 1–26 (MKTLASRKSLWMLLFIVIFWVSFTVF) are cleaved as a signal peptide. Residues asparagine 91, asparagine 159, and asparagine 223 are each glycosylated (N-linked (GlcNAc...) asparagine).

This sequence belongs to the NXPE family.

The protein localises to the secreted. This Mus musculus (Mouse) protein is NXPE family member 4 (Nxpe4).